Reading from the N-terminus, the 220-residue chain is Tumor protein D54 (220 aa).

Met-1 is modified (N-acetylmethionine). Ser-3, Ser-12, and Ser-19 each carry phosphoserine. The stretch at 40-82 (GLTEGEEEELRAELAKVEEEIVTLRQVLAAKERHCGELKRRLG) forms a coiled coil. A phosphoserine mark is found at Ser-96, Ser-149, Ser-168, and Ser-175. Thr-177 is modified (phosphothreonine). Residue Ser-180 is modified to Phosphoserine. Phosphothreonine is present on Thr-187. The disordered stretch occupies residues 189-220 (KSKVVGGRENGSDNLPPSPGSGDQTLPDHAPF). Phosphoserine is present on residues Ser-206 and Ser-209.

The protein belongs to the TPD52 family. In terms of assembly, forms a homodimer or heterodimer with other members of the family. Interacts with MAL2.

The polypeptide is Tumor protein D54 (Tpd52l2) (Mus musculus (Mouse)).